A 74-amino-acid polypeptide reads, in one-letter code: MKQSINIQDQFLNQLRKENTFVTLYLLNGFQLRGLIKGFDNFTVLLETEGKQQLIYKHAISTFVPQKNVSIELE.

The Sm domain occupies 9 to 69 (DQFLNQLRKE…ISTFVPQKNV (61 aa)).

It belongs to the Hfq family. As to quaternary structure, homohexamer.

In terms of biological role, RNA chaperone that binds small regulatory RNA (sRNAs) and mRNAs to facilitate mRNA translational regulation in response to envelope stress, environmental stress and changes in metabolite concentrations. Also binds with high specificity to tRNAs. This Bacillus cereus (strain Q1) protein is RNA-binding protein Hfq.